A 239-amino-acid polypeptide reads, in one-letter code: IkB-like protein (239 aa).

ANK repeat units lie at residues 48–80 (SKIT…EIIS), 87–118 (DGNS…GIKV), 124–153 (NGIT…NPNQ), and 158–187 (KGFN…KPLF). The Nuclear localization signal motif lies at 81–87 (HYRRDKD). The Nuclear localization signal signature appears at 203–214 (KKKPKIIITSCE). A PxIxITxC motif; Interaction with host PPP3CA motif is present at residues 206-213 (PKIIITSC). An FLCV motif motif is present at residues 228-231 (FLCV).

It belongs to the asfivirus A238L family. Interacts with host PPIA. Interacts with host PPP3CA/Calcineurin. Interacts with host RELA/p65; interaction of the 32 kDa form with host RELA results in the formation of a stable complex with NF-kappa-B. Interacts with host PPP3R1. Interacts with host EP300; this interaction inhibits the association of host EP300 with host RELA, JUN and NFATC2. In terms of processing, the protein exists in a 28 kDa and a 32 kDa form, probably due to post-translational modifications which are neither phosphorylation, nor sumoylation.

It localises to the host nucleus. The protein localises to the host cytoplasm. Its function is as follows. IkB-like protein that inhibits the binding of NF-kappa-B to DNA, thereby downregulating pro-inflammatory cytokine production. Forms a heterodimer with the NF-kappa-B subunit RELA/p65 and prevents the activation of the NF-kappa-B transcription factor. Inhibits calcineurin function, which is required for the induction of nuclear factor of activated T cells (NFAT)-dependent immune response genes. Prevents the binding of substrates to calcineurin without affecting the phosphatase activity. Does not contain the serine residues that are phosphorylated by host IkB kinase and thus is not degraded following stimulation of the NFkB pathway. This chain is IkB-like protein (A238L), found in Ornithodoros (relapsing fever ticks).